The sequence spans 57 residues: MATPIRPLSYSLRRQSNGESRRLSTRVTSVTVCSVRYSVLSFLNTTTVRWKRFVPVV.

The sequence is that of Protein 19.3 from Escherichia coli (Bacteriophage T7).